Consider the following 464-residue polypeptide: Argininosuccinate lyase (464 aa).

It belongs to the lyase 1 family. Argininosuccinate lyase subfamily.

Its subcellular location is the cytoplasm. The enzyme catalyses 2-(N(omega)-L-arginino)succinate = fumarate + L-arginine. It functions in the pathway amino-acid biosynthesis; L-arginine biosynthesis; L-arginine from L-ornithine and carbamoyl phosphate: step 3/3. The protein is Argininosuccinate lyase of Pseudomonas aeruginosa (strain ATCC 15692 / DSM 22644 / CIP 104116 / JCM 14847 / LMG 12228 / 1C / PRS 101 / PAO1).